A 416-amino-acid chain; its full sequence is Adenylosuccinate synthetase (416 aa).

GTP-binding positions include 13 to 19 (GDEGKGK) and 41 to 43 (GHT). Asp-14 serves as the catalytic Proton acceptor. The Mg(2+) site is built by Asp-14 and Gly-41. Residues 14-17 (DEGK), 39-42 (NAGH), Thr-126, Arg-140, Gln-220, Thr-235, and Arg-299 each bind IMP. His-42 acts as the Proton donor in catalysis. 295–301 (TTTGRPR) serves as a coordination point for substrate. Residues Arg-301, 327 to 329 (KLD), and 405 to 407 (STS) each bind GTP.

The protein belongs to the adenylosuccinate synthetase family. In terms of assembly, homodimer. Mg(2+) is required as a cofactor.

It is found in the cytoplasm. It carries out the reaction IMP + L-aspartate + GTP = N(6)-(1,2-dicarboxyethyl)-AMP + GDP + phosphate + 2 H(+). It functions in the pathway purine metabolism; AMP biosynthesis via de novo pathway; AMP from IMP: step 1/2. Its function is as follows. Plays an important role in the de novo pathway of purine nucleotide biosynthesis. Catalyzes the first committed step in the biosynthesis of AMP from IMP. In Sulfurovum sp. (strain NBC37-1), this protein is Adenylosuccinate synthetase.